Here is a 164-residue protein sequence, read N- to C-terminus: MAEDNNQAAQGGNDAQNQLQFSMQRIYVKDISFESPNAPSVFQNAFKPKVGLDLNTTHKQVGENLYEVVVKVTAQVTNNEDGATAFLAEVEQAGLFRIAGLSDDQLDHTLGAFCPNMLFPYARECIDNLVNRGSFPPLMLSPVNFEGMYAQKKKRESEAAENAH.

The protein belongs to the SecB family. As to quaternary structure, homotetramer, a dimer of dimers. One homotetramer interacts with 1 SecA dimer.

The protein localises to the cytoplasm. Functionally, one of the proteins required for the normal export of preproteins out of the cell cytoplasm. It is a molecular chaperone that binds to a subset of precursor proteins, maintaining them in a translocation-competent state. It also specifically binds to its receptor SecA. This chain is Protein-export protein SecB, found in Chromohalobacter salexigens (strain ATCC BAA-138 / DSM 3043 / CIP 106854 / NCIMB 13768 / 1H11).